A 432-amino-acid polypeptide reads, in one-letter code: Trigger factor (432 aa).

The region spanning 161-246 is the PPIase FKBP-type domain; that stretch reads GSRATIDFVG…LNKVEARELP (86 aa).

It belongs to the FKBP-type PPIase family. Tig subfamily.

The protein resides in the cytoplasm. It catalyses the reaction [protein]-peptidylproline (omega=180) = [protein]-peptidylproline (omega=0). Functionally, involved in protein export. Acts as a chaperone by maintaining the newly synthesized protein in an open conformation. Functions as a peptidyl-prolyl cis-trans isomerase. In Vibrio atlanticus (strain LGP32) (Vibrio splendidus (strain Mel32)), this protein is Trigger factor.